We begin with the raw amino-acid sequence, 340 residues long: DnaJ homolog subfamily B member 1 (340 aa).

One can recognise a J domain in the interval 2–70 (GKDYYQTLGL…REIFDRYGEE (69 aa)). Thr-307 carries the post-translational modification Phosphothreonine.

In terms of assembly, interacts with DNAJC3. Interacts with HSF1 (via transactivation domain); this interaction results in the inhibition of heat shock- and HSF1-induced transcriptional activity during the attenuation and recovery phase period of the heat shock response. Interacts with BAG3.

Its subcellular location is the cytoplasm. The protein localises to the nucleus. The protein resides in the nucleolus. In terms of biological role, interacts with HSP70 and can stimulate its ATPase activity. Stimulates the association between HSC70 and HIP. Negatively regulates heat shock-induced HSF1 transcriptional activity during the attenuation and recovery phase period of the heat shock response. Stimulates ATP hydrolysis and the folding of unfolded proteins mediated by HSPA1A/B (in vitro). The protein is DnaJ homolog subfamily B member 1 (DNAJB1) of Homo sapiens (Human).